Here is a 250-residue protein sequence, read N- to C-terminus: Lymphotoxin-beta (250 aa).

Over 1–26 the chain is Cytoplasmic; the sequence is MGAPGLETRAGGPNGKSYLLLASVGA. The chain crosses the membrane as a helical; Signal-anchor for type II membrane protein span at residues 27–47; the sequence is AVLGTLLLSVPITVLTVLALM. The Extracellular portion of the chain corresponds to 48-250; that stretch reads PQEQGGQVAD…KTFFGAVMVG (203 aa). Residues 87–249 form the THD domain; sequence PAAHLIGIAK…GKTFFGAVMV (163 aa). N-linked (GlcNAc...) asparagine glycosylation occurs at asparagine 228.

This sequence belongs to the tumor necrosis factor family. As to quaternary structure, heterotrimer of either two LTB and one LTA subunits or (less prevalent) two LTA and one LTB subunits.

It localises to the membrane. Its function is as follows. Cytokine that binds to LTBR/TNFRSF3. May play a specific role in immune response regulation. Provides the membrane anchor for the attachment of the heterotrimeric complex to the cell surface. This Notamacropus eugenii (Tammar wallaby) protein is Lymphotoxin-beta (LTB).